Consider the following 82-residue polypeptide: Zinc finger CCCH domain-containing protein 13 (82 aa).

2 consecutive C3H1-type zinc fingers follow at residues R9–N37 and R55–T82.

This is Zinc finger CCCH domain-containing protein 13 from Arabidopsis thaliana (Mouse-ear cress).